The primary structure comprises 462 residues: ATP synthase subunit beta (462 aa).

An ATP-binding site is contributed by 149 to 156 (GGAGVGKT).

Belongs to the ATPase alpha/beta chains family. As to quaternary structure, F-type ATPases have 2 components, CF(1) - the catalytic core - and CF(0) - the membrane proton channel. CF(1) has five subunits: alpha(3), beta(3), gamma(1), delta(1), epsilon(1). CF(0) has three main subunits: a(1), b(2) and c(9-12). The alpha and beta chains form an alternating ring which encloses part of the gamma chain. CF(1) is attached to CF(0) by a central stalk formed by the gamma and epsilon chains, while a peripheral stalk is formed by the delta and b chains.

It is found in the cell inner membrane. It carries out the reaction ATP + H2O + 4 H(+)(in) = ADP + phosphate + 5 H(+)(out). Functionally, produces ATP from ADP in the presence of a proton gradient across the membrane. The catalytic sites are hosted primarily by the beta subunits. This is ATP synthase subunit beta from Fusobacterium nucleatum subsp. nucleatum (strain ATCC 25586 / DSM 15643 / BCRC 10681 / CIP 101130 / JCM 8532 / KCTC 2640 / LMG 13131 / VPI 4355).